A 455-amino-acid chain; its full sequence is Enolase (455 aa).

Q166 serves as a coordination point for (2R)-2-phosphoglycerate. E208 (proton donor) is an active-site residue. Residues D249, E311, and D338 each contribute to the Mg(2+) site. (2R)-2-phosphoglycerate contacts are provided by K363, R392, S393, and K414. K363 acts as the Proton acceptor in catalysis.

Belongs to the enolase family. Requires Mg(2+) as cofactor.

Its subcellular location is the cytoplasm. It is found in the secreted. The protein localises to the cell surface. It carries out the reaction (2R)-2-phosphoglycerate = phosphoenolpyruvate + H2O. It participates in carbohydrate degradation; glycolysis; pyruvate from D-glyceraldehyde 3-phosphate: step 4/5. In terms of biological role, catalyzes the reversible conversion of 2-phosphoglycerate (2-PG) into phosphoenolpyruvate (PEP). It is essential for the degradation of carbohydrates via glycolysis. The chain is Enolase from Mycoplasma mobile (strain ATCC 43663 / 163K / NCTC 11711) (Mesomycoplasma mobile).